The primary structure comprises 621 residues: ATP-dependent DNA helicase Q1 (621 aa).

Residues 100–275 form the Helicase ATP-binding domain; the sequence is VNATMARKDI…QKILCVEKCL (176 aa). ATP is bound at residue 113–120; sequence MPTGGGKS. Positions 219–222 match the DEVH box motif; sequence DEVH. Residues 296-451 form the Helicase C-terminal domain; it reads SAEDFIENIA…EMVSYCQNIS (156 aa). Zn(2+)-binding residues include cysteine 453, cysteine 471, cysteine 475, and cysteine 478. 2 positions are modified to N6-acetyllysine: lysine 514 and lysine 522. Phosphoserine occurs at positions 597 and 602.

It belongs to the helicase family. RecQ subfamily. In terms of assembly, may form homodimers or higher order oligomers. Interacts with EXO1. Interacts with MLH1. Interacts with PARP1. It depends on Mg(2+) as a cofactor. Mn(2+) is required as a cofactor. Zn(2+) serves as cofactor.

Its subcellular location is the nucleus. The enzyme catalyses Couples ATP hydrolysis with the unwinding of duplex DNA by translocating in the 3'-5' direction.. The catalysed reaction is ATP + H2O = ADP + phosphate + H(+). It catalyses the reaction dATP + H2O = dADP + phosphate + H(+). Its function is as follows. DNA helicase that plays a role in DNA damage repair and genome stability. Exhibits a magnesium- and ATP-dependent DNA-helicase activity that unwinds single- and double-stranded DNA in a 3'-5' direction. Plays a role in restoring regressed replication forks. Required to restart stalled replication forks induced by abortive topoisomerase 1 and 2 lesions. May play a role in the repair of DNA that is damaged by ultraviolet light or other mutagens. This is ATP-dependent DNA helicase Q1 (Recql) from Rattus norvegicus (Rat).